We begin with the raw amino-acid sequence, 637 residues long: Poly(A) polymerase beta (637 aa).

Positions 1-10 are enriched in low complexity; that stretch reads MMPFPVTTQG. The disordered stretch occupies residues 1-23; sequence MMPFPVTTQGPPQPAPPPNRYGV. Residues 101-103, threonine 110, 114-116, aspartate 168, lysine 229, tyrosine 238, and 247-248 each bind ATP; these read FGS, DID, and GV. Residues aspartate 114, aspartate 116, and aspartate 168 each contribute to the Mg(2+) site. The disordered stretch occupies residues 535-555; it reads SVPSSTSTMKTGPLISSSQGR.

The protein belongs to the poly(A) polymerase family. As to quaternary structure, interacts with GSG1. Mg(2+) serves as cofactor. It depends on Mn(2+) as a cofactor. Testis specific.

It localises to the nucleus. The catalysed reaction is RNA(n) + ATP = RNA(n)-3'-adenine ribonucleotide + diphosphate. The polypeptide is Poly(A) polymerase beta (Homo sapiens (Human)).